The chain runs to 933 residues: DNA repair-scaffolding protein (933 aa).

3 disordered regions span residues 1–34, 67–174, and 205–224; these read MSGARRPGTSKRKRNWHIEHPSFREERSQQLRRG, SEKT…KGTL, and YSSDSEKEEDPEHSLFIDSE. 3 stretches are compositionally biased toward basic and acidic residues: residues 16-29, 71-87, and 119-132; these read WHIEHPSFREERSQ, GITEKHLELSPKPKTET, and RDGRHGPRADRLGD. Acidic residues predominate over residues 138–148; it reads PEDEDIEDELQ. The segment at 175-469 is necessary for interaction with RAD51; it reads DISDCDSCAS…GTGWTHGHEK (295 aa). Positions 214–224 are enriched in basic and acidic residues; it reads DPEHSLFIDSE.

As to quaternary structure, found in a complex, at least composed of BLM, RAD51 and SPIDR; the complex formation is mediated by SPIDR. Interacts (via C-terminal region) with BLM; the interaction is direct. Interacts with RAD51; the interaction is direct. Interacts (via the C-terminal region) with FIGNL1 (via N-terminal one-half region); the interaction is direct.

Its subcellular location is the nucleus. Functionally, plays a role in DNA double-strand break (DBS) repair via homologous recombination (HR). Serves as a scaffolding protein that helps to promote the recruitment of DNA-processing enzymes like the helicase BLM and recombinase RAD51 to site of DNA damage, and hence contributes to maintain genomic integrity. The protein is DNA repair-scaffolding protein (Spidr) of Mus musculus (Mouse).